The chain runs to 226 residues: ATP synthase subunit a (226 aa).

Helical transmembrane passes span F17–A37, L79–F99, S105–I125, F134–V154, L176–L196, and F199–A219.

The protein belongs to the ATPase A chain family. In terms of assembly, F-type ATPases have 2 components, CF(1) - the catalytic core - and CF(0) - the membrane proton channel. CF(1) has five subunits: alpha(3), beta(3), gamma(1), delta(1), epsilon(1). CF(0) has three main subunits: a(1), b(2) and c(9-12). The alpha and beta chains form an alternating ring which encloses part of the gamma chain. CF(1) is attached to CF(0) by a central stalk formed by the gamma and epsilon chains, while a peripheral stalk is formed by the delta and b chains.

The protein localises to the cell inner membrane. Key component of the proton channel; it plays a direct role in the translocation of protons across the membrane. This chain is ATP synthase subunit a, found in Campylobacter jejuni subsp. jejuni serotype O:6 (strain 81116 / NCTC 11828).